Consider the following 526-residue polypeptide: Exodeoxyribonuclease 7 large subunit (526 aa).

The tract at residues 497 to 526 is disordered; sequence AMTTEGGTPPGGAKKRSTKPAEPTKQGSLF.

This sequence belongs to the XseA family. As to quaternary structure, heterooligomer composed of large and small subunits.

The protein resides in the cytoplasm. It catalyses the reaction Exonucleolytic cleavage in either 5'- to 3'- or 3'- to 5'-direction to yield nucleoside 5'-phosphates.. Functionally, bidirectionally degrades single-stranded DNA into large acid-insoluble oligonucleotides, which are then degraded further into small acid-soluble oligonucleotides. This chain is Exodeoxyribonuclease 7 large subunit, found in Rhizobium etli (strain ATCC 51251 / DSM 11541 / JCM 21823 / NBRC 15573 / CFN 42).